Reading from the N-terminus, the 436-residue chain is Prenyltransferase nscD (436 aa).

This sequence belongs to the tryptophan dimethylallyltransferase family.

It participates in secondary metabolite biosynthesis. In terms of biological role, prenyltransferase; part of the gene cluster that mediates the biosynthesis of neosartoricin B, a prenylated anthracenone that probably exhibits T-cell antiproliferative activity, suggestive of a physiological role as an immunosuppressive agent. The non-reducing polyketide synthase nscA probably synthesizes and cyclizes the decaketide backbone. The hydrolase nscB then mediates the product release through hydrolysis followed by spontaneous decarboxylation. The prenyltransferase nscD catalyzes the addition of the dimethylallyl group to the aromatic C5. The FAD-dependent monooxygenase nscC is then responsible for the stereospecific hydroxylation at C2. Neosartoricin B can be converted into two additional compounds neosartoricins C and D. Neosartoricin C is a spirocyclic compound that is cyclized through the attack of C3 hydroxyl on C14, followed by dehydration. On the other hand, neosartoricin D is a further cyclized compound in which attack of C2 on C14 in neosartoricin C results in the formation of the acetal-containing dioxabicyclo-octanone ring. Both of these compounds are novel and possibly represent related metabolites of the gene cluster. The protein is Prenyltransferase nscD of Arthroderma otae (strain ATCC MYA-4605 / CBS 113480) (Microsporum canis).